Reading from the N-terminus, the 151-residue chain is Ribosome maturation factor RimP (151 aa).

The protein belongs to the RimP family.

It localises to the cytoplasm. Its function is as follows. Required for maturation of 30S ribosomal subunits. This chain is Ribosome maturation factor RimP, found in Photobacterium profundum (strain SS9).